The primary structure comprises 184 residues: Cytidylate kinase (184 aa).

8–16 (GQPGSGKTT) contacts ATP.

It belongs to the cytidylate kinase family. Type 2 subfamily.

The protein resides in the cytoplasm. The catalysed reaction is CMP + ATP = CDP + ADP. The enzyme catalyses dCMP + ATP = dCDP + ADP. In Pyrobaculum islandicum (strain DSM 4184 / JCM 9189 / GEO3), this protein is Cytidylate kinase.